We begin with the raw amino-acid sequence, 189 residues long: VRSLNSIVAVCQNMGIGKDGNLPWPPLRNEYKYFQRMTSTSHVEGKQNAVIMGKKTWFSIPEKNRPLKDRINIVLSRELKEAPKGAHYLSKSLDDALALLDSPELKSKVDMVWIVGGTAVYKAAMEKPINHRLFVTRILHEFESDTFFPEIDYKDFKLLTEYPGVPADIQEEDGIQYKFEVYQKSVLAQ.

A DHFR domain is found at 3 to 184 (SLNSIVAVCQ…IQYKFEVYQK (182 aa)). NADP(+) is bound by residues alanine 9 and 15-21 (GIGKDGN). 30-35 (EYKYFQ) is a binding site for substrate. 54 to 56 (KKT) contributes to the NADP(+) binding site. Substrate-binding residues include asparagine 64 and arginine 70. NADP(+) is bound by residues 76–78 (SRE) and 116–123 (GGTAVYKA).

It belongs to the dihydrofolate reductase family.

It catalyses the reaction (6S)-5,6,7,8-tetrahydrofolate + NADP(+) = 7,8-dihydrofolate + NADPH + H(+). The protein operates within cofactor biosynthesis; tetrahydrofolate biosynthesis; 5,6,7,8-tetrahydrofolate from 7,8-dihydrofolate: step 1/1. Its function is as follows. Key enzyme in folate metabolism. Contributes to the de novo mitochondrial thymidylate biosynthesis pathway. Catalyzes an essential reaction for de novo glycine and purine synthesis, and for DNA precursor synthesis. May bind to mRNA. In Gallus gallus (Chicken), this protein is Dihydrofolate reductase (DHFR).